A 192-amino-acid chain; its full sequence is Adenylate kinase (192 aa).

11 to 16 lines the ATP pocket; the sequence is GSGKGT. The segment at 31–60 is NMP; it reads STGDIFRANVKGETPLGIEAKKYMDNGDFV. AMP contacts are provided by residues Thr-32, Arg-37, 58–60, 86–89, and Gln-93; these read DFV and GYPR. The tract at residues 127 to 137 is LID; it reads GRAKETGRSDD. Residue Arg-128 participates in ATP binding. The AMP site is built by Arg-134 and Arg-145. Gly-173 provides a ligand contact to ATP.

Belongs to the adenylate kinase family. In terms of assembly, monomer.

Its subcellular location is the cytoplasm. The enzyme catalyses AMP + ATP = 2 ADP. It participates in purine metabolism; AMP biosynthesis via salvage pathway; AMP from ADP: step 1/1. Its function is as follows. Catalyzes the reversible transfer of the terminal phosphate group between ATP and AMP. Plays an important role in cellular energy homeostasis and in adenine nucleotide metabolism. The polypeptide is Adenylate kinase (Pseudarthrobacter chlorophenolicus (strain ATCC 700700 / DSM 12829 / CIP 107037 / JCM 12360 / KCTC 9906 / NCIMB 13794 / A6) (Arthrobacter chlorophenolicus)).